The chain runs to 246 residues: Metallo-beta-lactamase IMP-1 (246 aa).

An N-terminal signal peptide occupies residues 1-18; it reads MSKLSVFFIFLFCSIATA. Zn(2+) is bound by residues H95, H97, D99, H157, and C176. Positions 179 and 185 each coordinate a beta-lactam. H215 is a binding site for Zn(2+).

This sequence belongs to the metallo-beta-lactamase superfamily. Class-B beta-lactamase family. Monomer. Zn(2+) is required as a cofactor.

It is found in the periplasm. It catalyses the reaction a beta-lactam + H2O = a substituted beta-amino acid. Its activity is regulated as follows. Inhibited by captopril stereoisomers, Hg(2+), Fe(2+), Cu(2+), chelating agents such as EDTA, dansyl derivatives, including dansyl-C4SH, bisthiazolidines, mercaptoacetic acid and by PMPC phosphonates. Inhibited by 3-(3-mercaptopropionylsulfanyl)-propionic acid pentafluorophenyl ester, via a covalent binding to Lys-179. Not susceptible to inactivation by the beta-lactamase-blocking agents clavulanic acid or cloxacillin. In terms of biological role, class B beta-lactamase which confers resistance to the beta-lactam antibiotics, including penicillins, cephalosporins and carbapenems. Acts via hydrolysis of the beta-lactam ring. Has penicillin-, cephalosporin- and carbapenem-hydrolyzing activities. Has endoribonuclease activity, cleaving substrate RNAs preferentially between U/C and A, in vitro. This is Metallo-beta-lactamase IMP-1 from Serratia marcescens.